The following is a 302-amino-acid chain: Aspartate carbamoyltransferase catalytic subunit (302 aa).

Positions 53 and 54 each coordinate carbamoyl phosphate. An L-aspartate-binding site is contributed by lysine 82. Residues arginine 103, histidine 131, and glutamine 134 each coordinate carbamoyl phosphate. 2 residues coordinate L-aspartate: arginine 164 and arginine 223. Carbamoyl phosphate-binding residues include leucine 260 and proline 261.

This sequence belongs to the aspartate/ornithine carbamoyltransferase superfamily. ATCase family. Heterooligomer of catalytic and regulatory chains.

The enzyme catalyses carbamoyl phosphate + L-aspartate = N-carbamoyl-L-aspartate + phosphate + H(+). Its pathway is pyrimidine metabolism; UMP biosynthesis via de novo pathway; (S)-dihydroorotate from bicarbonate: step 2/3. In terms of biological role, catalyzes the condensation of carbamoyl phosphate and aspartate to form carbamoyl aspartate and inorganic phosphate, the committed step in the de novo pyrimidine nucleotide biosynthesis pathway. The chain is Aspartate carbamoyltransferase catalytic subunit from Methanococcus maripaludis (strain C6 / ATCC BAA-1332).